The primary structure comprises 579 residues: ATP-dependent lipid A-core flippase (579 aa).

Transmembrane regions (helical) follow at residues 24–44 (FLAA…LAEM), 61–81 (LMLP…TFLG), 147–167 (LFVI…TLIF), and 253–273 (LLVA…ALMA). One can recognise an ABC transmembrane type-1 domain in the interval 25-306 (LAAVVGYAIY…LTEVNSTIQK (282 aa)). One can recognise an ABC transporter domain in the interval 338-573 (VRFEGVRFRY…DGAYAALHQL (236 aa)). Residue 372 to 379 (GRSGSGKS) coordinates ATP.

It belongs to the ABC transporter superfamily. Lipid exporter (TC 3.A.1.106) family. As to quaternary structure, homodimer.

Its subcellular location is the cell inner membrane. The catalysed reaction is ATP + H2O + lipid A-core oligosaccharideSide 1 = ADP + phosphate + lipid A-core oligosaccharideSide 2.. Its function is as follows. Involved in lipopolysaccharide (LPS) biosynthesis. Translocates lipid A-core from the inner to the outer leaflet of the inner membrane. Transmembrane domains (TMD) form a pore in the inner membrane and the ATP-binding domain (NBD) is responsible for energy generation. The polypeptide is ATP-dependent lipid A-core flippase (Chromohalobacter salexigens (strain ATCC BAA-138 / DSM 3043 / CIP 106854 / NCIMB 13768 / 1H11)).